The chain runs to 264 residues: Glucosamine-6-phosphate deaminase (264 aa).

Aspartate 72 acts as the Proton acceptor; for enolization step in catalysis. Catalysis depends on aspartate 141, which acts as the For ring-opening step. The active-site Proton acceptor; for ring-opening step is histidine 143. Residue glutamate 148 is the For ring-opening step of the active site.

Belongs to the glucosamine/galactosamine-6-phosphate isomerase family. NagB subfamily. As to quaternary structure, homohexamer.

The catalysed reaction is alpha-D-glucosamine 6-phosphate + H2O = beta-D-fructose 6-phosphate + NH4(+). It participates in amino-sugar metabolism; N-acetylneuraminate degradation; D-fructose 6-phosphate from N-acetylneuraminate: step 5/5. With respect to regulation, allosterically activated by N-acetylglucosamine 6-phosphate (GlcNAc6P). In terms of biological role, catalyzes the reversible isomerization-deamination of glucosamine 6-phosphate (GlcN6P) to form fructose 6-phosphate (Fru6P) and ammonium ion. The chain is Glucosamine-6-phosphate deaminase from Glaesserella parasuis serovar 5 (strain SH0165) (Haemophilus parasuis).